The chain runs to 230 residues: Ribonuclease 3 (230 aa).

The region spanning 5–134 (EALLENSFNI…FLGALLLDKG (130 aa)) is the RNase III domain. Glutamate 47 serves as a coordination point for Mg(2+). Residue aspartate 51 is part of the active site. Residues aspartate 120 and glutamate 123 each coordinate Mg(2+). Glutamate 123 is a catalytic residue. A DRBM domain is found at 160 to 229 (DYKTCLQELL…AKNALAQLSE (70 aa)).

It belongs to the ribonuclease III family. As to quaternary structure, homodimer. The cofactor is Mg(2+).

The protein resides in the cytoplasm. It catalyses the reaction Endonucleolytic cleavage to 5'-phosphomonoester.. Functionally, digests double-stranded RNA. Involved in the processing of primary rRNA transcript to yield the immediate precursors to the large and small rRNAs (23S and 16S). Processes some mRNAs, and tRNAs when they are encoded in the rRNA operon. Processes pre-crRNA and tracrRNA of type II CRISPR loci if present in the organism. The protein is Ribonuclease 3 of Streptococcus equi subsp. zooepidemicus (strain H70).